Consider the following 439-residue polypeptide: Methylenetetrahydrofolate--tRNA-(uracil-5-)-methyltransferase TrmFO (439 aa).

8 to 13 (GGGLAG) is a binding site for FAD.

This sequence belongs to the MnmG family. TrmFO subfamily. FAD is required as a cofactor.

It localises to the cytoplasm. It carries out the reaction uridine(54) in tRNA + (6R)-5,10-methylene-5,6,7,8-tetrahydrofolate + NADH + H(+) = 5-methyluridine(54) in tRNA + (6S)-5,6,7,8-tetrahydrofolate + NAD(+). The catalysed reaction is uridine(54) in tRNA + (6R)-5,10-methylene-5,6,7,8-tetrahydrofolate + NADPH + H(+) = 5-methyluridine(54) in tRNA + (6S)-5,6,7,8-tetrahydrofolate + NADP(+). Catalyzes the folate-dependent formation of 5-methyl-uridine at position 54 (M-5-U54) in all tRNAs. The polypeptide is Methylenetetrahydrofolate--tRNA-(uracil-5-)-methyltransferase TrmFO (Dictyoglomus turgidum (strain DSM 6724 / Z-1310)).